The chain runs to 374 residues: Chaperone protein DnaJ (374 aa).

In terms of domain architecture, J spans 4 to 68 (DYYEILGVSR…EMKARFDRFG (65 aa)). The segment at 132–214 (GGDKELTIKH…CGGRGQKEAT (83 aa)) adopts a CR-type zinc-finger fold. Positions 145, 148, 162, 165, 188, 191, 202, and 205 each coordinate Zn(2+). CXXCXGXG motif repeat units follow at residues 145–152 (CGTCNGSG), 162–169 (CSTCGGTG), 188–195 (CPSCNGSG), and 202–209 (CVDCGGRG).

Belongs to the DnaJ family. Homodimer. Requires Zn(2+) as cofactor.

It is found in the cytoplasm. Participates actively in the response to hyperosmotic and heat shock by preventing the aggregation of stress-denatured proteins and by disaggregating proteins, also in an autonomous, DnaK-independent fashion. Unfolded proteins bind initially to DnaJ; upon interaction with the DnaJ-bound protein, DnaK hydrolyzes its bound ATP, resulting in the formation of a stable complex. GrpE releases ADP from DnaK; ATP binding to DnaK triggers the release of the substrate protein, thus completing the reaction cycle. Several rounds of ATP-dependent interactions between DnaJ, DnaK and GrpE are required for fully efficient folding. Also involved, together with DnaK and GrpE, in the DNA replication of plasmids through activation of initiation proteins. This Trichodesmium erythraeum (strain IMS101) protein is Chaperone protein DnaJ.